Reading from the N-terminus, the 430-residue chain is Asparagine--tRNA ligase (430 aa).

The protein belongs to the class-II aminoacyl-tRNA synthetase family. In terms of assembly, homodimer.

It localises to the cytoplasm. The enzyme catalyses tRNA(Asn) + L-asparagine + ATP = L-asparaginyl-tRNA(Asn) + AMP + diphosphate + H(+). This chain is Asparagine--tRNA ligase, found in Shouchella clausii (strain KSM-K16) (Alkalihalobacillus clausii).